The primary structure comprises 245 residues: Enolase-phosphatase E1 (245 aa).

Belongs to the HAD-like hydrolase superfamily. MasA/MtnC family. In terms of assembly, monomer. The cofactor is Mg(2+).

It carries out the reaction 5-methylsulfanyl-2,3-dioxopentyl phosphate + H2O = 1,2-dihydroxy-5-(methylsulfanyl)pent-1-en-3-one + phosphate. The protein operates within amino-acid biosynthesis; L-methionine biosynthesis via salvage pathway; L-methionine from S-methyl-5-thio-alpha-D-ribose 1-phosphate: step 3/6. It participates in amino-acid biosynthesis; L-methionine biosynthesis via salvage pathway; L-methionine from S-methyl-5-thio-alpha-D-ribose 1-phosphate: step 4/6. Its function is as follows. Bifunctional enzyme that catalyzes the enolization of 2,3-diketo-5-methylthiopentyl-1-phosphate (DK-MTP-1-P) into the intermediate 2-hydroxy-3-keto-5-methylthiopentenyl-1-phosphate (HK-MTPenyl-1-P), which is then dephosphorylated to form the acireductone 1,2-dihydroxy-3-keto-5-methylthiopentene (DHK-MTPene). This is Enolase-phosphatase E1 from Synechococcus sp. (strain CC9902).